Reading from the N-terminus, the 178-residue chain is NADH-ubiquinone oxidoreductase chain 6 (178 aa).

5 helical membrane-spanning segments follow: residues 1 to 21 (MMTYIVTILSTIFVVSFVGFS), 25 to 45 (SPIYGGVGLIVSGGVGCGIVL), 48 to 68 (GGSFLGLMVFLIYLGGMLVVF), 89 to 109 (VLLTFLLGLVGEVVLMIYLLL), and 152 to 172 (YGYWLVIVSGWSLVTCIIVVM).

It belongs to the complex I subunit 6 family.

The protein resides in the mitochondrion membrane. The enzyme catalyses a ubiquinone + NADH + 5 H(+)(in) = a ubiquinol + NAD(+) + 4 H(+)(out). Its function is as follows. Core subunit of the mitochondrial membrane respiratory chain NADH dehydrogenase (Complex I) that is believed to belong to the minimal assembly required for catalysis. Complex I functions in the transfer of electrons from NADH to the respiratory chain. The immediate electron acceptor for the enzyme is believed to be ubiquinone. The chain is NADH-ubiquinone oxidoreductase chain 6 (MT-ND6) from Pseudosoriculus fumidus (Taiwanese brown-toothed shrew).